We begin with the raw amino-acid sequence, 136 residues long: uncharacterized protein (136 aa).

The chain crosses the membrane as a helical span at residues 40–62 (LFYSISLCVSLLLHISLCVSVYV).

It localises to the membrane. This is an uncharacterized protein from Homo sapiens (Human).